Consider the following 244-residue polypeptide: Sperm-egg fusion protein Juno (244 aa).

Positions methionine 1–alanine 19 are cleaved as a signal peptide. 8 cysteine pairs are disulfide-bonded: cysteine 27–cysteine 55, cysteine 47–cysteine 95, cysteine 56–cysteine 99, cysteine 79–cysteine 166, cysteine 86–cysteine 137, cysteine 126–cysteine 200, cysteine 130–cysteine 180, and cysteine 143–cysteine 160. The tract at residues tryptophan 62 to leucine 81 is important for interaction with IZUMO1. Asparagine 73 carries an N-linked (GlcNAc...) asparagine glycan. The N-linked (GlcNAc...) asparagine glycan is linked to asparagine 185. Glycine 222 is lipidated: GPI-anchor amidated glycine. The propeptide occupies serine 223 to proline 244.

Belongs to the folate receptor family. As to quaternary structure, monomer. Interacts with IZUMO1; the interaction is direct. IZUMO1 and IZUMO1R/JUNO form a complex with 1:1 stoichiometry. Interacts with WDR54. Post-translationally, the protein is rapidly cleaved following fertilization, being only weakly detectable in zona-intact fertilized eggs at telophase II and undetectable at the pronuclear stage. Sheding is probably required to block to polyspermy and ensuring egg fusion with a single sperm. Widely expressed with higher expression in thymus, spleen and lung. Present at the cell surface of unfertilized oocytes, while it is barely detectable 30 to 40 minutes after fertilization (at protein level).

It is found in the cell membrane. Functionally, receptor for IZUMO1 present at the cell surface of oocytes (oolemma), which is essential for species-specific gamete recognition and fertilization. The IZUMO1:IZUMO1R/JUNO interaction is a necessary adhesion event between sperm and egg that is required for fertilization but is not sufficient for cell fusion. The ligand-receptor interaction probably does not act as a membrane 'fusogen'. Does not bind folate. The sequence is that of Sperm-egg fusion protein Juno from Mus musculus (Mouse).